The primary structure comprises 105 residues: Neuropeptide-like protein 32 (105 aa).

An N-terminal signal peptide occupies residues 1–22 (MRQFNLLLVFCLIALTALPVFS). Residues 23–54 (FPNGLTMDSIDMEPMGAFDENGAADESPRVKR) constitute a propeptide that is removed on maturation. Glycine 59 carries the post-translational modification Glycine amide. At tryptophan 64 the chain carries Tryptophan amide. Glycine amide occurs at positions 68, 73, and 80. Position 86 is a tryptophan amide (tryptophan 86). 2 positions are modified to glycine amide: glycine 91 and glycine 98. The residue at position 103 (tryptophan 103) is a Tryptophan amide.

Belongs to the YARP (YGGW-amide related peptide) family.

It localises to the secreted. Functionally, may have antimicrobial activity. The protein is Neuropeptide-like protein 32 (nlp-32) of Caenorhabditis elegans.